We begin with the raw amino-acid sequence, 317 residues long: Regulator of microtubule dynamics protein 1 (317 aa).

The residue at position 168 (K168) is an N6-succinyllysine. TPR repeat units lie at residues 171–207 and 225–261; these read AICIGDVGDYEGIKAKIANAYIIKEHFEKAIELNPKD and PWYQRRIAKVLFATPPGSTYEEALGYFHRAEQVDPNF.

It belongs to the RMDN family. As to quaternary structure, interacts with microtubules.

It localises to the cytoplasm. The protein localises to the cytoskeleton. The protein resides in the spindle. It is found in the spindle pole. This is Regulator of microtubule dynamics protein 1 (RMDN1) from Bos taurus (Bovine).